The sequence spans 453 residues: Cholecystokinin receptor (453 aa).

Residues 1–64 are Extracellular-facing; the sequence is MESLRSLSNI…ILDRKKPSPS (64 aa). Asparagine 9, asparagine 22, asparagine 30, asparagine 35, and asparagine 39 each carry an N-linked (GlcNAc...) asparagine glycan. A helical membrane pass occupies residues 65 to 94; sequence DLNLWVRIVMYSVIFLLSVFGNTLIIIVLV. Topologically, residues 95 to 104 are cytoplasmic; that stretch reads MNKRLRTITN. The helical transmembrane segment at 105–131 threads the bilayer; sequence SFLLSLALSDLMVAVLCMPFTLIPNLM. The Extracellular segment spans residues 132–142; the sequence is ENFIFGEVICR. Cysteine 141 and cysteine 223 are disulfide-bonded. Residues 143–164 form a helical membrane-spanning segment; sequence AAAYFMGLSVSVSTFNLVAISI. Residues 165–184 are Cytoplasmic-facing; the sequence is ERYSAICNPLKSRVWQTRSH. A helical transmembrane segment spans residues 185 to 205; that stretch reads AYRVIAATWVLSSIIMIPYLV. The Extracellular portion of the chain corresponds to 206–237; it reads YNKTVTFPMKDRRVGHQCRLVWPSKQVQQAWY. The chain crosses the membrane as a helical span at residues 238-261; it reads VLLLTILFFIPGVVMIVAYGLISR. The Cytoplasmic portion of the chain corresponds to 262–343; the sequence is ELYRGIQFEM…KLMAKKRVIR (82 aa). The helical transmembrane segment at 344–364 threads the bilayer; sequence MLIVIVAMFFICWMPIFVANT. Over 365-379 the chain is Extracellular; the sequence is WKAFDELSAFNTLTG. Residues 380–403 traverse the membrane as a helical segment; sequence APISFIHLLSYTSACVNPLIYCFM. Cysteine 401 carries the S-palmitoyl cysteine lipid modification. The Cytoplasmic segment spans residues 404-453; sequence NKRFRKAFLGTFSSCIKPCRNFRDTDEDIAATGASLSKFSYTTVSSLGPA.

The protein belongs to the G-protein coupled receptor 1 family. Brain and stomach.

It is found in the cell membrane. Its function is as follows. Receptor for cholecystokinin. This receptor mediates its action by association with G proteins that activate a phosphatidylinositol-calcium second messenger system. Has high affinity for CCK-8 and low affinities for gastrin-17-I, CCK-4, and unsulfated CCK-8. This Xenopus laevis (African clawed frog) protein is Cholecystokinin receptor (cckar).